Here is a 696-residue protein sequence, read N- to C-terminus: Polyribonucleotide nucleotidyltransferase (696 aa).

The Mg(2+) site is built by D489 and D495. Residues 556 to 615 form the KH domain; that stretch reads PQYVTMKINPEKIRDVIGKGGVVIREITEATNCAIDISDDGTIKIAAHTTEEGEAAKRRI. Residues 625 to 693 enclose the S1 motif domain; sequence GKVYEGTVVK…RQGRVRLSMK (69 aa).

This sequence belongs to the polyribonucleotide nucleotidyltransferase family. As to quaternary structure, component of the RNA degradosome, which is a multiprotein complex involved in RNA processing and mRNA degradation. Mg(2+) serves as cofactor.

The protein resides in the cytoplasm. It catalyses the reaction RNA(n+1) + phosphate = RNA(n) + a ribonucleoside 5'-diphosphate. In terms of biological role, involved in mRNA degradation. Catalyzes the phosphorolysis of single-stranded polyribonucleotides processively in the 3'- to 5'-direction. The polypeptide is Polyribonucleotide nucleotidyltransferase (Coxiella burnetii (strain CbuK_Q154) (Coxiella burnetii (strain Q154))).